A 288-amino-acid chain; its full sequence is Sulfhydrogenase 2 subunit gamma (288 aa).

The FAD-binding FR-type domain maps to 4-103; the sequence is YRSYDARIIE…RGPYGNGFPM (100 aa). 4 residues coordinate [2Fe-2S] cluster: Cys-250, Cys-255, Cys-258, and Cys-270.

Dimer of heterotetramer of alpha, beta, gamma and delta subunits. The nickel-containing alpha and delta subunits constitute the hydrogenase activity. The beta and gamma subunits (flavin-containing dimer) constitute the sulfur reductase activity. The cofactor is FAD. [2Fe-2S] cluster is required as a cofactor.

It localises to the cytoplasm. The catalysed reaction is n sulfur + H2 = (n-1) sulfur + hydrogen sulfide + H(+). Its function is as follows. Part of a bifunctional enzyme complex that functions as a hydrogen-evolving hydrogenase with sulfur-reducing activity. May play a role in hydrogen cycling during fermentative growth. Activity exhibited with NAD in addition to NADPH. The beta and gamma subunits form the sulfur-reducing component that catalyzes the cytoplasmic production of hydrogen sulfide in the presence of elemental sulfur. The protein is Sulfhydrogenase 2 subunit gamma of Pyrococcus furiosus (strain ATCC 43587 / DSM 3638 / JCM 8422 / Vc1).